Consider the following 265-residue polypeptide: Glutamate racemase (265 aa).

Substrate-binding positions include 7 to 8 (DS) and 39 to 40 (YG). Cysteine 71 (proton donor/acceptor) is an active-site residue. Residue 72–73 (NT) participates in substrate binding. Cysteine 184 serves as the catalytic Proton donor/acceptor. 185 to 186 (TH) serves as a coordination point for substrate.

This sequence belongs to the aspartate/glutamate racemases family.

The catalysed reaction is L-glutamate = D-glutamate. It functions in the pathway cell wall biogenesis; peptidoglycan biosynthesis. In terms of biological role, provides the (R)-glutamate required for cell wall biosynthesis. This chain is Glutamate racemase, found in Sulfurovum sp. (strain NBC37-1).